Consider the following 230-residue polypeptide: MSKRYKQLTEKIDVTKAYSVDEASLLVKNLVSAKFDETVEVAFNLNVDPRHADQMIRGAIVLPHGTGKTVRVAVFAKGAKADEAKAAGADIVGTDDLVQQIKDGIFNFDIVVAAPDCMGLVGQIGRILGPKGMMPNPKTGTVTPDVATAVKNVKGGQVNFRVDKKGNIHAGIGKASFNADKISENLITFVKAINRHKPSSAKGRYIKNCALSLTMSPAIKLDVMQLADMK.

It belongs to the universal ribosomal protein uL1 family. As to quaternary structure, part of the 50S ribosomal subunit.

Binds directly to 23S rRNA. The L1 stalk is quite mobile in the ribosome, and is involved in E site tRNA release. Functionally, protein L1 is also a translational repressor protein, it controls the translation of the L11 operon by binding to its mRNA. This chain is Large ribosomal subunit protein uL1, found in Sulfurimonas denitrificans (strain ATCC 33889 / DSM 1251) (Thiomicrospira denitrificans (strain ATCC 33889 / DSM 1251)).